We begin with the raw amino-acid sequence, 355 residues long: Putative cyclin-A3-1 (355 aa).

It belongs to the cyclin family. Cyclin AB subfamily.

This chain is Putative cyclin-A3-1 (CYCA3-1), found in Arabidopsis thaliana (Mouse-ear cress).